A 510-amino-acid polypeptide reads, in one-letter code: NAD(P)H-quinone oxidoreductase subunit 2 A, chloroplastic (510 aa).

The next 13 helical transmembrane spans lie at 24-44 (LLLFDGSFIFPECILIFGLIL), 57-77 (IPWLYFISSTSLVMSITALLF), 99-119 (IFQFLILLCSTLCIPLSVEYI), 124-144 (MAITEFLLFVLTATLGGMFLC), 149-169 (LITIFVAPECFSLCSYLLSGY), 183-203 (YLLMGGASSSILVHGFSWLYG), 227-247 (PGISIALIFITVGIGFKLSPA), 295-315 (WHLLLEILAILSMILGNLIAI), 323-343 (MLAYSSIGQIGYVIIGIIVGD), 354-374 (YMLFYISMNLGTFACIVSFGL), 395-415 (ALSLALCLLSLGGLPPLAGFF), 418-438 (LHLFWCGWQAGLYFLVSIGLL), and 484-504 (MIVCVIASTIPGISMNPIIAI).

It belongs to the complex I subunit 2 family. NDH is composed of at least 16 different subunits, 5 of which are encoded in the nucleus.

It localises to the plastid. The protein resides in the chloroplast thylakoid membrane. It catalyses the reaction a plastoquinone + NADH + (n+1) H(+)(in) = a plastoquinol + NAD(+) + n H(+)(out). The enzyme catalyses a plastoquinone + NADPH + (n+1) H(+)(in) = a plastoquinol + NADP(+) + n H(+)(out). In terms of biological role, NDH shuttles electrons from NAD(P)H:plastoquinone, via FMN and iron-sulfur (Fe-S) centers, to quinones in the photosynthetic chain and possibly in a chloroplast respiratory chain. The immediate electron acceptor for the enzyme in this species is believed to be plastoquinone. Couples the redox reaction to proton translocation, and thus conserves the redox energy in a proton gradient. The chain is NAD(P)H-quinone oxidoreductase subunit 2 A, chloroplastic from Vitis vinifera (Grape).